A 144-amino-acid chain; its full sequence is MLVPKRVKFRRVHRGKLRGEAKGGKSVAFGDYGLQALDSHWISNRQIEAARVAITRYMKRGGKVWIKIFPHKSYTAKGVGVRMGNGKGTPDGWVAPVKRGKVMFEVGGVSEEVAREALRLAAMKLPVRTKVLSREEVGGESNED.

It belongs to the universal ribosomal protein uL16 family. In terms of assembly, part of the 50S ribosomal subunit.

Functionally, binds 23S rRNA and is also seen to make contacts with the A and possibly P site tRNAs. This chain is Large ribosomal subunit protein uL16, found in Levilactobacillus brevis (strain ATCC 367 / BCRC 12310 / CIP 105137 / JCM 1170 / LMG 11437 / NCIMB 947 / NCTC 947) (Lactobacillus brevis).